The sequence spans 514 residues: Major facilitator superfamily domain-containing protein 4A (514 aa).

Transmembrane regions (helical) follow at residues 19 to 39, 53 to 73, 82 to 102, 107 to 127, and 139 to 159; these read LTYW…GPTL, ISWV…LGGV, LWAL…IPFC, VLAL…TVAN, and AVFL…SPLI. 2 N-linked (GlcNAc...) asparagine glycosylation sites follow: N177 and N203. The next 7 membrane-spanning stretches (helical) occupy residues 221–241, 307–327, 347–367, 376–396, 400–420, 438–458, and 466–486; these read YAFW…LMLL, FFAI…LTGA, VAGY…LLSI, ATMV…LLIF, VVFL…TFPS, VLVT…GSIF, and FLVC…LLLF.

This sequence belongs to the major facilitator superfamily.

It localises to the membrane. This Pongo abelii (Sumatran orangutan) protein is Major facilitator superfamily domain-containing protein 4A (MFSD4A).